The following is a 360-amino-acid chain: Protein phosphatase 1 regulatory subunit 7 (360 aa).

A disordered region spans residues 1–63; sequence MAAERGAGQQ…RGAEDPEEEH (63 aa). Ala2 is modified (N-acetylalanine). Phosphoserine occurs at positions 12, 24, 27, 44, and 47. Basic and acidic residues predominate over residues 17–34; sequence EVDRRVESEESGDEEGKK. LRR repeat units lie at residues 77-98, 99-120, 121-142, 143-164, 165-186, 187-208, 209-230, 231-252, 253-274, 275-296, and 297-318; these read DAEDVDLNHYRIGKIEGFEVLK, KVKSLCLRQNLIKCIENLDELQ, SLRELDLYDNQIKKIENLEALT, ELEVLDISFNLLRNIEGIDKLT, QLKKLFLVNNKINKIENISTLQ, QLQMLELGSNRIRAIENIDTLT, NLESLFLGKNKITKLQNLDALS, NLTVLSMQSNRLTKIEGLQNLV, NLRELYLSHNGIEVIEGLENNN, KLTMLDIASNRIKKIENISHLT, and ELQEFWMNDNLLESWSDLDELK. Residue Ser322 is modified to Phosphoserine. The LRRCT domain maps to 331–360; sequence NPLQKDPQYRRKVMLALPSVRQIDATFVRF.

It belongs to the SDS22 family. Interacts with PPP1CA, PPP1CB and PPP1CC/PPP1G.

The protein resides in the nucleus. Functionally, regulatory subunit of protein phosphatase 1. This is Protein phosphatase 1 regulatory subunit 7 (Ppp1r7) from Rattus norvegicus (Rat).